Reading from the N-terminus, the 93-residue chain is Small ribosomal subunit protein uS19 (93 aa).

Belongs to the universal ribosomal protein uS19 family.

Functionally, protein S19 forms a complex with S13 that binds strongly to the 16S ribosomal RNA. This is Small ribosomal subunit protein uS19 from Campylobacter jejuni subsp. jejuni serotype O:6 (strain 81116 / NCTC 11828).